Here is a 122-residue protein sequence, read N- to C-terminus: UPF0102 protein RHECIAT_CH0000358 (122 aa).

This sequence belongs to the UPF0102 family.

This Rhizobium etli (strain CIAT 652) protein is UPF0102 protein RHECIAT_CH0000358.